A 141-amino-acid polypeptide reads, in one-letter code: Putative antiporter subunit mnhB2 (141 aa).

The next 4 helical transmembrane spans lie at threonine 10–glycine 30, glycine 35–phenylalanine 55, isoleucine 70–glycine 90, and isoleucine 114–leucine 134.

It belongs to the CPA3 antiporters (TC 2.A.63) subunit B family. May form a heterooligomeric complex that consists of seven subunits: mnhA2, mnhB2, mnhC2, mnhD2, mnhE2, mnhF2 and mnhG2.

It is found in the cell membrane. The chain is Putative antiporter subunit mnhB2 (mnhB2) from Staphylococcus aureus (strain Mu3 / ATCC 700698).